A 182-amino-acid polypeptide reads, in one-letter code: Plasmolipin (182 aa).

The Cytoplasmic portion of the chain corresponds to 1–35; the sequence is MAEFPSKVSTRTSSPAQGAEASVSALRPDLGFVRS. S9 carries the post-translational modification Phosphoserine. In terms of domain architecture, MARVEL spans 32 to 166; that stretch reads FVRSRLGALM…SAFFSYQAWR (135 aa). Residues 36 to 56 traverse the membrane as a helical segment; it reads RLGALMLLQLVLGLLVWALIA. The Extracellular segment spans residues 57 to 68; it reads DTPYHLYPAYGW. The helical transmembrane segment at 69–89 threads the bilayer; sequence VMFVAVFLWLVTIVLFNLYLF. Residues 90–99 lie on the Cytoplasmic side of the membrane; the sequence is QLHMKLYMVP. The helical transmembrane segment at 100–120 threads the bilayer; the sequence is WPLVLMIFNISATVLYITAFI. Residues 121–141 are Extracellular-facing; sequence ACSAAVDLTSLRGTRPYNQRA. Residues 142-162 traverse the membrane as a helical segment; the sequence is AASFFACLVMIAYGVSAFFSY. Topologically, residues 163-182 are cytoplasmic; sequence QAWRGVGSNAATSQMAGGYA.

It belongs to the MAL family. In terms of assembly, forms oligomers. In terms of processing, phosphorylated.

Its subcellular location is the cell membrane. The protein localises to the myelin membrane. It localises to the apical cell membrane. The protein resides in the golgi apparatus. In terms of biological role, main component of the myelin sheath that plays an important role in myelin membrane biogenesis and myelination. Plays an essential function in apical endocytosis. Regulates epithelial development through the regulation of apical endocytosis. Part of the intracellular machinery that mediates basolateral-to-apical transport of ICAM-1, an essential adhesion receptor in epithelial cells, from the subapical compartment in hepatic epithelial cells. This is Plasmolipin from Homo sapiens (Human).